The chain runs to 473 residues: Probable lipid II flippase MurJ (473 aa).

Transmembrane regions (helical) follow at residues 31 to 51 (TFGA…PFFL), 90 to 110 (LVTL…ASIF), 125 to 145 (LIRL…FYSV), 153 to 173 (FLPA…CLFG), 177 to 197 (WAAA…LPFG), 215 to 235 (FFGT…DVNV), 253 to 273 (LYQL…LSTL), 300 to 320 (IGLM…GAFT), 327 to 347 (SAQI…FNLL), 360 to 380 (PFFA…ILGF), 382 to 402 (MGAS…FVFL), 414 to 434 (IFKI…LRGS), and 439 to 459 (LGTI…SKLL).

Belongs to the MurJ/MviN family.

The protein resides in the cell inner membrane. Its pathway is cell wall biogenesis; peptidoglycan biosynthesis. Functionally, involved in peptidoglycan biosynthesis. Transports lipid-linked peptidoglycan precursors from the inner to the outer leaflet of the cytoplasmic membrane. This is Probable lipid II flippase MurJ from Thermotoga maritima (strain ATCC 43589 / DSM 3109 / JCM 10099 / NBRC 100826 / MSB8).